The primary structure comprises 123 residues: Protein LLP homolog (123 aa).

Over residues Met-1–Asn-21 the composition is skewed to basic residues. 2 disordered regions span residues Met-1 to Ala-22 and Asp-61 to Trp-123. A compositionally biased stretch (basic and acidic residues) spans Glu-70–His-89. Residues Gln-100–Trp-123 show a composition bias toward basic residues.

It belongs to the learning-associated protein family.

The protein resides in the nucleus. It localises to the nucleolus. Its subcellular location is the chromosome. In terms of biological role, regulates dendritic and spine growth and synaptic transmission. This chain is Protein LLP homolog (llph), found in Xenopus laevis (African clawed frog).